The sequence spans 298 residues: 4-hydroxy-tetrahydrodipicolinate synthase (298 aa).

Pyruvate is bound at residue threonine 51. Tyrosine 139 serves as the catalytic Proton donor/acceptor. Lysine 167 acts as the Schiff-base intermediate with substrate in catalysis. Isoleucine 209 is a binding site for pyruvate.

It belongs to the DapA family. Homotetramer; dimer of dimers.

It localises to the cytoplasm. It catalyses the reaction L-aspartate 4-semialdehyde + pyruvate = (2S,4S)-4-hydroxy-2,3,4,5-tetrahydrodipicolinate + H2O + H(+). Its pathway is amino-acid biosynthesis; L-lysine biosynthesis via DAP pathway; (S)-tetrahydrodipicolinate from L-aspartate: step 3/4. Its function is as follows. Catalyzes the condensation of (S)-aspartate-beta-semialdehyde [(S)-ASA] and pyruvate to 4-hydroxy-tetrahydrodipicolinate (HTPA). In Histophilus somni (strain 129Pt) (Haemophilus somnus), this protein is 4-hydroxy-tetrahydrodipicolinate synthase.